The chain runs to 365 residues: N-acetylgalactosamine-N,N'-diacetylbacillosaminyl-diphospho-undecaprenol 4-alpha-N-acetylgalactosaminyltransferase (365 aa).

The protein belongs to the glycosyltransferase group 1 family.

It is found in the cell inner membrane. The enzyme catalyses N-acetyl-alpha-D-galactosaminyl-(1-&gt;3)-N,N'-diacetyl-alpha-D-bacillosaminyl-tri-trans,hepta-cis-undecaprenyl diphosphate + UDP-N-acetyl-alpha-D-galactosamine = N-acetyl-alpha-D-galactosaminyl-(1-&gt;4)-N-acetyl-alpha-D-galactosaminyl-(1-&gt;3)-N,N'-diacetyl-alpha-D-bacillosaminyl-tri-trans,heptacis-undecaprenyl diphosphate + UDP + H(+). It participates in protein modification; protein glycosylation. Functionally, adds a GalNAc residue on to the Und-PP-Bac2,4diNAc-GalNAc disaccharide in the N-linked protein glycosylation pathway. Transfers the third sugar in the heptasaccharide biosynthesis. In Campylobacter jejuni subsp. jejuni serotype O:2 (strain ATCC 700819 / NCTC 11168), this protein is N-acetylgalactosamine-N,N'-diacetylbacillosaminyl-diphospho-undecaprenol 4-alpha-N-acetylgalactosaminyltransferase (pglJ).